A 709-amino-acid polypeptide reads, in one-letter code: DNA ligase (709 aa).

Residues 1 to 20 form a disordered region; the sequence is MTATHRGAQADASAPAGPLP. NAD(+)-binding positions include 52–56, 101–102, and E146; these read DAEYD and SL. K148 acts as the N6-AMP-lysine intermediate in catalysis. R169, E205, K322, and K346 together coordinate NAD(+). Zn(2+) is bound by residues C440, C443, C458, and C464. A BRCT domain is found at 623–709; sequence KAPAPLSGKT…AEAGAAPAQE (87 aa).

Belongs to the NAD-dependent DNA ligase family. LigA subfamily. Requires Mg(2+) as cofactor. It depends on Mn(2+) as a cofactor.

It carries out the reaction NAD(+) + (deoxyribonucleotide)n-3'-hydroxyl + 5'-phospho-(deoxyribonucleotide)m = (deoxyribonucleotide)n+m + AMP + beta-nicotinamide D-nucleotide.. In terms of biological role, DNA ligase that catalyzes the formation of phosphodiester linkages between 5'-phosphoryl and 3'-hydroxyl groups in double-stranded DNA using NAD as a coenzyme and as the energy source for the reaction. It is essential for DNA replication and repair of damaged DNA. The sequence is that of DNA ligase from Cupriavidus necator (strain ATCC 17699 / DSM 428 / KCTC 22496 / NCIMB 10442 / H16 / Stanier 337) (Ralstonia eutropha).